The primary structure comprises 190 residues: Movement protein (190 aa).

The protein belongs to the tombusvirus/aureusvirus movement protein p22 family.

It localises to the host membrane. Functionally, transports viral genome to neighboring plant cells directly through plasmosdesmata, without any budding. The movement protein allows efficient cell to cell propagation, by bypassing the host cell wall barrier. The chain is Movement protein from Cucumber necrosis virus (CNV).